The chain runs to 1204 residues: Cingulin (1204 aa).

Residues 7 to 357 are head; that stretch reads MAEPRGPVDH…GVISSGSSKA (351 aa). The segment at 25-48 is disordered; that stretch reads EPVSGAEMGTLRRGGRRPAKDARA. A ZIM motif is present at residues 48–62; it reads ASTYGVAVRVQGIAG. An interaction with TJP1/ZO1 region spans residues 54–67; the sequence is AVRVQGIAGQPFVV. Disordered stretches follow at residues 68–174 and 186–266; these read LNSG…DTAP and DGQL…FSRA. A compositionally biased stretch (polar residues) spans 93 to 119; that stretch reads ALSSDSELPENPYSQVQGFPAPSQSST. Residues S95, S96, S98, S135, S137, S140, S155, S165, S214, and S217 each carry the phosphoserine modification. The segment covering 207 to 231 has biased composition (basic and acidic residues); the sequence is EQRKRSKSLDSRLPRDTLEERERQS. Positions 232 to 245 are enriched in polar residues; the sequence is TNHWNPSTKYNNHV. Residues 247–261 show a composition bias toward low complexity; it reads SLKQPAQSPSPSPLS. S258, S276, S338, and S351 each carry phosphoserine. Positions 358-1161 form a coiled coil; the sequence is MAGQGELARK…SLEKDSWRKA (804 aa). The disordered stretch occupies residues 379 to 398; the sequence is VKKRQKLEPSRAGLERQLEE. N6-acetyllysine is present on K579. Residues 1161–1182 are disordered; it reads ASRSAAESALKHEGLSSDEEFD. Residues 1162 to 1204 are tail; sequence SRSAAESALKHEGLSSDEEFDSVYDPSSIASLLTESNLQTSSC. Phosphoserine occurs at positions 1176, 1177, and 1183.

The protein belongs to the cingulin family. In terms of assembly, homodimer. Interacts with TJP1/ZO1 and SPEF1.

Its subcellular location is the cell junction. It localises to the tight junction. Probably plays a role in the formation and regulation of the tight junction (TJ) paracellular permeability barrier. The chain is Cingulin from Plecturocebus moloch (Dusky titi monkey).